Here is a 364-residue protein sequence, read N- to C-terminus: Protein-glutamate methylesterase/protein-glutamine glutaminase (364 aa).

The region spanning 5-123 (RVLVVDDTIL…PAANKAALAN (119 aa)) is the Response regulatory domain. 4-aspartylphosphate is present on Asp56. The region spanning 174–364 (EIVVIGISTG…QEIVHTVKLY (191 aa)) is the CheB-type methylesterase domain. Active-site residues include Ser181, His208, and Asp306.

The protein belongs to the CheB family. Post-translationally, phosphorylated by CheA. Phosphorylation of the N-terminal regulatory domain activates the methylesterase activity.

It is found in the cytoplasm. It carries out the reaction [protein]-L-glutamate 5-O-methyl ester + H2O = L-glutamyl-[protein] + methanol + H(+). The enzyme catalyses L-glutaminyl-[protein] + H2O = L-glutamyl-[protein] + NH4(+). In terms of biological role, involved in chemotaxis. Part of a chemotaxis signal transduction system that modulates chemotaxis in response to various stimuli. Catalyzes the demethylation of specific methylglutamate residues introduced into the chemoreceptors (methyl-accepting chemotaxis proteins or MCP) by CheR. Also mediates the irreversible deamidation of specific glutamine residues to glutamic acid. This is Protein-glutamate methylesterase/protein-glutamine glutaminase from Desulfotalea psychrophila (strain LSv54 / DSM 12343).